We begin with the raw amino-acid sequence, 436 residues long: Glutamyl-tRNA reductase (436 aa).

Substrate is bound by residues 52–55 (TCHR), serine 105, 110–112 (EDQ), and glutamine 116. Cysteine 53 functions as the Nucleophile in the catalytic mechanism. An NADP(+)-binding site is contributed by 184 to 189 (GAGEMG).

The protein belongs to the glutamyl-tRNA reductase family. In terms of assembly, homodimer.

The enzyme catalyses (S)-4-amino-5-oxopentanoate + tRNA(Glu) + NADP(+) = L-glutamyl-tRNA(Glu) + NADPH + H(+). It participates in porphyrin-containing compound metabolism; protoporphyrin-IX biosynthesis; 5-aminolevulinate from L-glutamyl-tRNA(Glu): step 1/2. Its function is as follows. Catalyzes the NADPH-dependent reduction of glutamyl-tRNA(Glu) to glutamate 1-semialdehyde (GSA). This chain is Glutamyl-tRNA reductase, found in Halobacterium salinarum (strain ATCC 29341 / DSM 671 / R1).